We begin with the raw amino-acid sequence, 104 residues long: Large ribosomal subunit protein uL24 (104 aa).

The protein belongs to the universal ribosomal protein uL24 family. Part of the 50S ribosomal subunit.

Functionally, one of two assembly initiator proteins, it binds directly to the 5'-end of the 23S rRNA, where it nucleates assembly of the 50S subunit. One of the proteins that surrounds the polypeptide exit tunnel on the outside of the subunit. The polypeptide is Large ribosomal subunit protein uL24 (Shewanella halifaxensis (strain HAW-EB4)).